A 294-amino-acid polypeptide reads, in one-letter code: Transcriptional regulatory protein RXT3 (294 aa).

The residue at position 2 (S2) is an N-acetylserine.

The protein belongs to the RXT3 family. Component of the RPD3C(L) complex composed of at least ASH1, CTI6, DEP1, PHO23, RPD3, RXT2, RXT3, SAP30, SDS3, SIN3, UME1 and UME6.

The protein resides in the nucleus. Functionally, component of the RPD3C(L) histone deacetylase complex (HDAC) responsible for the deacetylation of lysine residues on the N-terminal part of the core histones (H2A, H2B, H3 and H4). Histone deacetylation gives a tag for epigenetic repression and plays an important role in transcriptional regulation, cell cycle progression and developmental events. This Saccharomyces cerevisiae (strain ATCC 204508 / S288c) (Baker's yeast) protein is Transcriptional regulatory protein RXT3 (RXT3).